The following is a 213-amino-acid chain: MNKKLLSEFGDPVQRVKNALQSLKRGNGILVLDDENRENEGDMIFAAENMTVNQMALAIRFGSGIVCICLTKEKCKILNLPMMVKKNNSKYKTAFTVSIESAYGITTGVSAYDRIITIKTAIKDNAKPDDLNRPGHVFPLQAHPGGILSRAGHTEAAVDLTKLAGLKPAGVICEVMNDDGSMARMPEIINFSKKYNMPVLIIKDIIEYYNFIN.

Residues 37-38 (RE), aspartate 42, 150-154 (RAGHT), and glutamate 174 contribute to the D-ribulose 5-phosphate site. Mg(2+) is bound at residue glutamate 38. Histidine 153 contributes to the Mg(2+) binding site.

It belongs to the DHBP synthase family. In terms of assembly, homodimer. Requires Mg(2+) as cofactor. Mn(2+) serves as cofactor.

The enzyme catalyses D-ribulose 5-phosphate = (2S)-2-hydroxy-3-oxobutyl phosphate + formate + H(+). It participates in cofactor biosynthesis; riboflavin biosynthesis; 2-hydroxy-3-oxobutyl phosphate from D-ribulose 5-phosphate: step 1/1. Catalyzes the conversion of D-ribulose 5-phosphate to formate and 3,4-dihydroxy-2-butanone 4-phosphate. This Wigglesworthia glossinidia brevipalpis protein is 3,4-dihydroxy-2-butanone 4-phosphate synthase.